We begin with the raw amino-acid sequence, 418 residues long: UDP-N-acetylglucosamine 1-carboxyvinyltransferase (418 aa).

23-24 (KN) serves as a coordination point for phosphoenolpyruvate. Arg-93 is a binding site for UDP-N-acetyl-alpha-D-glucosamine. The Proton donor role is filled by Asp-117. Residues Asp-305 and Val-327 each contribute to the UDP-N-acetyl-alpha-D-glucosamine site.

The protein belongs to the EPSP synthase family. MurA subfamily.

The protein localises to the cytoplasm. It catalyses the reaction phosphoenolpyruvate + UDP-N-acetyl-alpha-D-glucosamine = UDP-N-acetyl-3-O-(1-carboxyvinyl)-alpha-D-glucosamine + phosphate. The protein operates within cell wall biogenesis; peptidoglycan biosynthesis. Cell wall formation. Adds enolpyruvyl to UDP-N-acetylglucosamine. In Mycobacterium leprae (strain TN), this protein is UDP-N-acetylglucosamine 1-carboxyvinyltransferase.